A 152-amino-acid chain; its full sequence is Ribosome maturation factor RimP (152 aa).

It belongs to the RimP family.

Its subcellular location is the cytoplasm. Its function is as follows. Required for maturation of 30S ribosomal subunits. In Aeromonas salmonicida (strain A449), this protein is Ribosome maturation factor RimP.